We begin with the raw amino-acid sequence, 334 residues long: Glyceraldehyde-3-phosphate dehydrogenase (334 aa).

NAD(+)-binding positions include 12–13 (RI), aspartate 37, arginine 81, and serine 123. D-glyceraldehyde 3-phosphate-binding positions include 153–155 (SCT) and threonine 184. Cysteine 154 acts as the Nucleophile in catalysis. Position 185 (asparagine 185) interacts with NAD(+). D-glyceraldehyde 3-phosphate contacts are provided by residues arginine 199, 212-213 (TG), and arginine 235. NAD(+) is bound at residue asparagine 314.

It belongs to the glyceraldehyde-3-phosphate dehydrogenase family. In terms of assembly, homotetramer.

The protein resides in the cytoplasm. It catalyses the reaction D-glyceraldehyde 3-phosphate + phosphate + NAD(+) = (2R)-3-phospho-glyceroyl phosphate + NADH + H(+). It functions in the pathway carbohydrate degradation; glycolysis; pyruvate from D-glyceraldehyde 3-phosphate: step 1/5. Functionally, catalyzes the oxidative phosphorylation of glyceraldehyde 3-phosphate (G3P) to 1,3-bisphosphoglycerate (BPG) using the cofactor NAD. The first reaction step involves the formation of a hemiacetal intermediate between G3P and a cysteine residue, and this hemiacetal intermediate is then oxidized to a thioester, with concomitant reduction of NAD to NADH. The reduced NADH is then exchanged with the second NAD, and the thioester is attacked by a nucleophilic inorganic phosphate to produce BPG. This Pseudomonas aeruginosa (strain ATCC 15692 / DSM 22644 / CIP 104116 / JCM 14847 / LMG 12228 / 1C / PRS 101 / PAO1) protein is Glyceraldehyde-3-phosphate dehydrogenase (gap).